Reading from the N-terminus, the 383-residue chain is 8-amino-7-oxononanoate synthase (383 aa).

Position 23 (Arg-23) interacts with substrate. 110–111 (GF) serves as a coordination point for pyridoxal 5'-phosphate. His-135 is a substrate binding site. Residues Ser-181, His-209, and Thr-235 each contribute to the pyridoxal 5'-phosphate site. Lys-238 carries the N6-(pyridoxal phosphate)lysine modification. Thr-351 is a substrate binding site.

It belongs to the class-II pyridoxal-phosphate-dependent aminotransferase family. BioF subfamily. In terms of assembly, homodimer. Pyridoxal 5'-phosphate is required as a cofactor.

The catalysed reaction is 6-carboxyhexanoyl-[ACP] + L-alanine + H(+) = (8S)-8-amino-7-oxononanoate + holo-[ACP] + CO2. It functions in the pathway cofactor biosynthesis; biotin biosynthesis. Functionally, catalyzes the decarboxylative condensation of pimeloyl-[acyl-carrier protein] and L-alanine to produce 8-amino-7-oxononanoate (AON), [acyl-carrier protein], and carbon dioxide. This is 8-amino-7-oxononanoate synthase from Aliivibrio salmonicida (strain LFI1238) (Vibrio salmonicida (strain LFI1238)).